Here is a 117-residue protein sequence, read N- to C-terminus: Immunoglobulin heavy variable 3-21 (117 aa).

An N-terminal signal peptide occupies residues 1–19; the sequence is MELGLRWVFLVAILEGVQC. Positions 20–44 are framework-1; it reads EVQLVESGGGLVKPGGSLRLSCAAS. The Ig-like domain maps to 20–117; it reads EVQLVESGGG…EDTAVYYCAR (98 aa). Cys41 and Cys115 are oxidised to a cystine. The interval 45-52 is complementarity-determining-1; it reads GFTFSSYS. The segment at 53-69 is framework-2; the sequence is MNWVRQAPGKGLEWVSS. The interval 70–77 is complementarity-determining-2; sequence ISSSSSYI. The framework-3 stretch occupies residues 78 to 115; that stretch reads YYADSVKGRFTISRDNAKNSLYLQMNSLRAEDTAVYYC. A complementarity-determining-3 region spans residues 116 to 117; it reads AR.

Immunoglobulins are composed of two identical heavy chains and two identical light chains; disulfide-linked.

The protein localises to the secreted. The protein resides in the cell membrane. In terms of biological role, v region of the variable domain of immunoglobulin heavy chains that participates in the antigen recognition. Immunoglobulins, also known as antibodies, are membrane-bound or secreted glycoproteins produced by B lymphocytes. In the recognition phase of humoral immunity, the membrane-bound immunoglobulins serve as receptors which, upon binding of a specific antigen, trigger the clonal expansion and differentiation of B lymphocytes into immunoglobulins-secreting plasma cells. Secreted immunoglobulins mediate the effector phase of humoral immunity, which results in the elimination of bound antigens. The antigen binding site is formed by the variable domain of one heavy chain, together with that of its associated light chain. Thus, each immunoglobulin has two antigen binding sites with remarkable affinity for a particular antigen. The variable domains are assembled by a process called V-(D)-J rearrangement and can then be subjected to somatic hypermutations which, after exposure to antigen and selection, allow affinity maturation for a particular antigen. The protein is Immunoglobulin heavy variable 3-21 of Homo sapiens (Human).